We begin with the raw amino-acid sequence, 106 residues long: ATP-dependent Clp protease adapter protein ClpS (106 aa).

This sequence belongs to the ClpS family. As to quaternary structure, binds to the N-terminal domain of the chaperone ClpA.

Its function is as follows. Involved in the modulation of the specificity of the ClpAP-mediated ATP-dependent protein degradation. This chain is ATP-dependent Clp protease adapter protein ClpS, found in Edwardsiella ictaluri (strain 93-146).